The following is a 269-amino-acid chain: 4-hydroxy-tetrahydrodipicolinate reductase (269 aa).

NAD(+)-binding positions include 11 to 16 (GASGRM) and glutamate 37. NADP(+) is bound at residue arginine 38. NAD(+) contacts are provided by residues 101–103 (GTT) and 125–128 (AGNM). Catalysis depends on histidine 158, which acts as the Proton donor/acceptor. Histidine 159 contributes to the (S)-2,3,4,5-tetrahydrodipicolinate binding site. The active-site Proton donor is the lysine 162. A (S)-2,3,4,5-tetrahydrodipicolinate-binding site is contributed by 168–169 (GT).

It belongs to the DapB family.

It is found in the cytoplasm. The catalysed reaction is (S)-2,3,4,5-tetrahydrodipicolinate + NAD(+) + H2O = (2S,4S)-4-hydroxy-2,3,4,5-tetrahydrodipicolinate + NADH + H(+). It carries out the reaction (S)-2,3,4,5-tetrahydrodipicolinate + NADP(+) + H2O = (2S,4S)-4-hydroxy-2,3,4,5-tetrahydrodipicolinate + NADPH + H(+). It participates in amino-acid biosynthesis; L-lysine biosynthesis via DAP pathway; (S)-tetrahydrodipicolinate from L-aspartate: step 4/4. Functionally, catalyzes the conversion of 4-hydroxy-tetrahydrodipicolinate (HTPA) to tetrahydrodipicolinate. This Ruegeria pomeroyi (strain ATCC 700808 / DSM 15171 / DSS-3) (Silicibacter pomeroyi) protein is 4-hydroxy-tetrahydrodipicolinate reductase.